A 92-amino-acid chain; its full sequence is mRNA interferase toxin YafQ (92 aa).

The active-site Proton donor is the H87.

It belongs to the RelE toxin family. YafQ subfamily. As to quaternary structure, monomer in the absence of antitoxin. Forms a heterotetramer with antitoxin DinJ, with 2 YafQ-DinJ dimers associated via the N-terminus of the DinJ antitoxins (YafQ-(DinJ)2-YafQ). In this complex the toxin activity is inhibited. Binds the 70S ribosome via the 50S ribosomal subunit.

In terms of biological role, toxic component of a type II toxin-antitoxin (TA) system. A sequence-specific mRNA endoribonuclease that inhibits translation elongation and induces bacterial stasis. Cleavage occurs between the second and third residue of the Lys codon followed by a G or A (5'AAA(G/A)3'), is reading-frame dependent and occurs within the 5' end of most mRNAs. Ribosome-binding confers the sequence specificity and reading frame-dependence. When overexpressed in liquid media YafQ partially inhibits protein synthesis, with a reduction in growth rate and colony growth rate. This effect is counteracted by coexpression with cognate antitoxin DinJ. YafQ and DinJ together bind their own promoter, and repress its expression. Functionally, cell death governed by the MazE-MazF and DinJ-YafQ TA systems seems to play a role in biofilm formation. This Escherichia coli (strain K12) protein is mRNA interferase toxin YafQ (yafQ).